We begin with the raw amino-acid sequence, 191 residues long: Abscisic acid receptor PYR1 (191 aa).

Residues 23-176 (YQLDPGSCSS…NLQKLATVAE (154 aa)) are START-like. Position 59 (Lys-59) interacts with abscisate. The residue at position 78 (Thr-78) is a Phosphothreonine; by CARK1. The Gate loop motif lies at 85–89 (SGLPA). Residues 89–94 (ANTSTE), 116–122 (RLTNYKS), and Glu-141 each bind abscisate. A Latch loop motif is present at residues 115-117 (HRL).

This sequence belongs to the PYR/PYL/RCAR abscisic acid intracellular receptor family. In terms of assembly, homodimer. Binds ABA on one subunit only. Interacts with HAB1, AHG3, ABI1 and ABI2 when complexed to ABA, and possibly with other PP2Cs. Binds to CARs protein in an ABA-independent manner, both at the plasma membrane and in the nucleus. Interacts directly with CAR1 and CAR4. Interacts with CARK1 in the cytosol. Interacts with AIP1 in an abscisic acid-dependent manner. Interacts with FREE1 (via N-terminus). Interacts with the E3 ubiquitin-protein ligase RSL1 at the plasma membrane. Post-translationally, ubiquitynated and degraded by the proteasome upon binding to the E3 ubiquitin-protein ligase RSL1 at the plasma membrane. In terms of processing, phosphorylated by CARK1 especially in response to abscisic acid (ABA); this phosphorylation promotes its stability and inhibitory ability to ABI1.

It is found in the cytoplasm. The protein resides in the cytosol. Its subcellular location is the nucleus. The protein localises to the cell membrane. It localises to the vacuole. Receptor for abscisic acid (ABA) required for ABA-mediated responses such as stomatal closure and germination inhibition. Inhibits the activity of group-A protein phosphatases type 2C (PP2Cs) when activated by ABA. Can be activated by both (-)-ABA and (+)-ABA. Promotes drought tolerance. The sequence is that of Abscisic acid receptor PYR1 from Arabidopsis thaliana (Mouse-ear cress).